A 557-amino-acid polypeptide reads, in one-letter code: T-complex protein 1 subunit eta (557 aa).

Alanine 2 bears the N-acetylalanine mark. Positions 529-557 are disordered; it reads PKSESAQGDAAGAMGRGRGGGRGRGMRRR. A compositionally biased stretch (basic residues) spans 547-557; the sequence is GGGRGRGMRRR.

It belongs to the TCP-1 chaperonin family. As to quaternary structure, heterooligomeric complex of about 850 to 900 kDa that forms two stacked rings, 12 to 16 nm in diameter. Interacts with KNAT1.

Its subcellular location is the cytoplasm. Molecular chaperone; assists the folding of proteins upon ATP hydrolysis. Known to play a role, in vitro, in the folding of actin and tubulin. In Arabidopsis thaliana (Mouse-ear cress), this protein is T-complex protein 1 subunit eta.